We begin with the raw amino-acid sequence, 396 residues long: Probable sugar efflux transporter (396 aa).

12 helical membrane-spanning segments follow: residues 15 to 35 (VVTL…PVGL), 50 to 70 (VGIM…PFML), 81 to 101 (LICL…SWSF), 103 to 123 (VLVI…SITA), 136 to 156 (AQAL…GLPL), 170 to 190 (FFAI…LLPL), 209 to 229 (PALM…YTAY), 246 to 266 (FATA…VIFG), 275 to 295 (ALVS…LPAA), 299 to 319 (IHLG…GLGM), 333 to 353 (VAMA…ALVG), and 364 to 384 (MIGY…IIIF).

It belongs to the major facilitator superfamily. SotB (TC 2.A.1.2) family.

It is found in the cell inner membrane. Functionally, involved in the efflux of sugars. The physiological role may be the reduction of the intracellular concentration of toxic sugars or sugar metabolites. In Escherichia coli O157:H7 (strain EC4115 / EHEC), this protein is Probable sugar efflux transporter.